A 116-amino-acid chain; its full sequence is Large ribosomal subunit protein uL18 (116 aa).

The protein belongs to the universal ribosomal protein uL18 family. Part of the 50S ribosomal subunit; part of the 5S rRNA/L5/L18/L25 subcomplex. Contacts the 5S and 23S rRNAs.

In terms of biological role, this is one of the proteins that bind and probably mediate the attachment of the 5S RNA into the large ribosomal subunit, where it forms part of the central protuberance. The chain is Large ribosomal subunit protein uL18 from Pseudomonas aeruginosa (strain UCBPP-PA14).